We begin with the raw amino-acid sequence, 119 residues long: Small ribosomal subunit protein bS16 (119 aa).

Belongs to the bacterial ribosomal protein bS16 family.

The chain is Small ribosomal subunit protein bS16 from Chlamydia abortus (strain DSM 27085 / S26/3) (Chlamydophila abortus).